Reading from the N-terminus, the 102-residue chain is Large ribosomal subunit protein bL21 (102 aa).

This sequence belongs to the bacterial ribosomal protein bL21 family. As to quaternary structure, part of the 50S ribosomal subunit. Contacts protein L20.

Functionally, this protein binds to 23S rRNA in the presence of protein L20. The chain is Large ribosomal subunit protein bL21 from Ehrlichia ruminantium (strain Gardel).